We begin with the raw amino-acid sequence, 87 residues long: MLPKYYQNLPYNGKRIFEKFYDRSLQKYKSTQIATKLACCAVRKKYMLIDGKWQPRPDANNSDTTTSTEDSTTDTETEYSTTEDELA.

The tract at residues lysine 52 to alanine 87 is disordered. The span at serine 71–alanine 87 shows a compositional bias: acidic residues.

This is an uncharacterized protein from Autographa californica nuclear polyhedrosis virus (AcMNPV).